We begin with the raw amino-acid sequence, 417 residues long: Cobalamin binding intrinsic factor (417 aa).

The first 18 residues, 1–18 (MAWLSFYLLNVLWAVAGT), serve as a signal peptide directing secretion. 3 disulfide bridges follow: cysteine 26-cysteine 246, cysteine 103-cysteine 288, and cysteine 143-cysteine 182. Aspartate 171 serves as a coordination point for cob(II)alamin. A Phosphoserine modification is found at serine 191. A glycan (N-linked (GlcNAc...) asparagine) is linked at asparagine 209. The cob(II)alamin site is built by aspartate 222 and glutamine 270. N-linked (GlcNAc...) asparagine glycosylation is found at asparagine 311 and asparagine 330. Cob(II)alamin contacts are provided by residues 365–370 (SWGLIV) and 386–395 (WEFLSGKTPL). A glycan (N-linked (GlcNAc...) asparagine) is linked at asparagine 413.

It belongs to the eukaryotic cobalamin transport proteins family. Interacts with CUBN (via CUB domains). In terms of processing, the N-terminus is blocked. In terms of tissue distribution, gastric mucosa.

It localises to the secreted. Promotes absorption of the essential vitamin cobalamin (Cbl) in the ileum. After interaction with CUBN, the CBLIF-cobalamin complex is internalized via receptor-mediated endocytosis. The chain is Cobalamin binding intrinsic factor from Rattus norvegicus (Rat).